Consider the following 171-residue polypeptide: Large ribosomal subunit protein bL9 (171 aa).

This sequence belongs to the bacterial ribosomal protein bL9 family.

Binds to the 23S rRNA. The chain is Large ribosomal subunit protein bL9 from Rickettsia canadensis (strain McKiel).